The sequence spans 274 residues: Large ribosomal subunit protein uL2cz/uL2cy (274 aa).

Disordered stretches follow at residues 1 to 22 (MAIN…DSQV) and 224 to 274 (NPVD…RRSK).

Belongs to the universal ribosomal protein uL2 family. As to quaternary structure, part of the 50S ribosomal subunit.

The protein localises to the plastid. The protein resides in the chloroplast. The chain is Large ribosomal subunit protein uL2cz/uL2cy (rpl2-A) from Helianthus annuus (Common sunflower).